A 214-amino-acid polypeptide reads, in one-letter code: MLKPPIGILGGTFDPIHIGHLRPAIEARDALGLAEVRLLPNHIPPHRASPFCSSEQRLAMVALAAAENPGFVVDERELKRDTPSWTIDTLIELRHELPDTPLCFLMGMDSLLGLPSWHRWQELLDYAHLVVSTRPGWQPDYPAEVAELLARHQSQQVADLHRLRHGRIWLADNLPVELSATRLRALLATGADPRYLLPPSVAQYIRQQGLYRPA.

Belongs to the NadD family.

It carries out the reaction nicotinate beta-D-ribonucleotide + ATP + H(+) = deamido-NAD(+) + diphosphate. The protein operates within cofactor biosynthesis; NAD(+) biosynthesis; deamido-NAD(+) from nicotinate D-ribonucleotide: step 1/1. In terms of biological role, catalyzes the reversible adenylation of nicotinate mononucleotide (NaMN) to nicotinic acid adenine dinucleotide (NaAD). The polypeptide is Probable nicotinate-nucleotide adenylyltransferase (Aeromonas hydrophila subsp. hydrophila (strain ATCC 7966 / DSM 30187 / BCRC 13018 / CCUG 14551 / JCM 1027 / KCTC 2358 / NCIMB 9240 / NCTC 8049)).